The following is a 375-amino-acid chain: ATP-sensitive inward rectifier potassium channel 15 (375 aa).

Residues 1-60 (MDAIHLGMSSAPLVKHTNGVGLKAHRPRVMSKSGHSNVRIDKVDGIYLLYLQDLWTTVID) lie on the Cytoplasmic side of the membrane. A helical transmembrane segment spans residues 61-87 (MKWRYKLTLFAATFVMTWFLFGVVYYA). Over 88–113 (IAFIHGDLQLGESNSNHTPCIMKVDS) the chain is Extracellular. The helical; Pore-forming intramembrane region spans 114–130 (LTGAFLFSLESQTTIGY). A Selectivity filter motif is present at residues 127-132 (TIGYGV). Residues 131-139 (GVRSITEEC) are Extracellular-facing. Residues 140 to 165 (PHAIFLLVAQLVITTLIEIFITGTFL) form a helical membrane-spanning segment. The Cytoplasmic segment spans residues 166 to 375 (AKIARPKKRA…RSLLLQQSNV (210 aa)).

Belongs to the inward rectifier-type potassium channel (TC 1.A.2.1) family. KCNJ15 subfamily. Can form heteromultimeric channels with Kir5.1/KCNJ16. Interacts with PATJ. In terms of tissue distribution, expressed in the proximal segment of the nephron.

The protein localises to the membrane. The protein resides in the cell membrane. It catalyses the reaction K(+)(in) = K(+)(out). Its activity is regulated as follows. Channel activity is regulated by variations of cytosolic pH; reversibly inhibited by acidic pH values. Inhibited by Ba(2+) and Cs(+) in a voltage-dependent manner. Inward rectifier potassium channels are characterized by a greater tendency to allow potassium to flow into the cell rather than out of it. Their voltage dependence is regulated by the concentration of extracellular potassium; as external potassium is raised, the voltage range of the channel opening shifts to more positive voltages. The inward rectification is mainly due to the blockage of outward current by internal magnesium. In Mus musculus (Mouse), this protein is ATP-sensitive inward rectifier potassium channel 15 (Kcnj15).